The chain runs to 396 residues: Chaperone protein DnaJ (396 aa).

The J domain maps to 6–71 (DYYEVLEVTK…DKRSRYDQFG (66 aa)). The CR-type zinc-finger motif lies at 154-236 (GVEKKFKLKK…CGGDGIVYGE (83 aa)). C167, C170, C184, C187, C210, C213, C224, and C227 together coordinate Zn(2+). CXXCXGXG motif repeat units follow at residues 167-174 (CNHCHGTG), 184-191 (CPTCKGSG), 210-217 (CPTCNGEG), and 224-231 (CKECGGDG).

This sequence belongs to the DnaJ family. As to quaternary structure, homodimer. It depends on Zn(2+) as a cofactor.

Its subcellular location is the cytoplasm. In terms of biological role, participates actively in the response to hyperosmotic and heat shock by preventing the aggregation of stress-denatured proteins and by disaggregating proteins, also in an autonomous, DnaK-independent fashion. Unfolded proteins bind initially to DnaJ; upon interaction with the DnaJ-bound protein, DnaK hydrolyzes its bound ATP, resulting in the formation of a stable complex. GrpE releases ADP from DnaK; ATP binding to DnaK triggers the release of the substrate protein, thus completing the reaction cycle. Several rounds of ATP-dependent interactions between DnaJ, DnaK and GrpE are required for fully efficient folding. Also involved, together with DnaK and GrpE, in the DNA replication of plasmids through activation of initiation proteins. The protein is Chaperone protein DnaJ of Bacteroides thetaiotaomicron (strain ATCC 29148 / DSM 2079 / JCM 5827 / CCUG 10774 / NCTC 10582 / VPI-5482 / E50).